A 205-amino-acid polypeptide reads, in one-letter code: Glycerol-3-phosphate acyltransferase (205 aa).

6 consecutive transmembrane segments (helical) span residues 5–25 (LIATVLFGYLLGSVSFSYIIA), 56–76 (ICVLLLDVAKGVAPALLAIAL), 84–104 (VPALAGLAAILGHNWPIYFGF), 114–134 (IGVVATLLFLPALCAGIVAIL), 144–164 (LGSLLFAVLTPIAALIMLPFF), and 165–185 (HYPLEYIYLAVLLAILSLWRH).

This sequence belongs to the PlsY family. Probably interacts with PlsX.

It is found in the cell membrane. The enzyme catalyses an acyl phosphate + sn-glycerol 3-phosphate = a 1-acyl-sn-glycero-3-phosphate + phosphate. The protein operates within lipid metabolism; phospholipid metabolism. In terms of biological role, catalyzes the transfer of an acyl group from acyl-phosphate (acyl-PO(4)) to glycerol-3-phosphate (G3P) to form lysophosphatidic acid (LPA). This enzyme utilizes acyl-phosphate as fatty acyl donor, but not acyl-CoA or acyl-ACP. The chain is Glycerol-3-phosphate acyltransferase from Shouchella clausii (strain KSM-K16) (Alkalihalobacillus clausii).